We begin with the raw amino-acid sequence, 263 residues long: Small ribosomal subunit protein eS4 (263 aa).

The S4 RNA-binding domain maps to 42-104; it reads LPLIIFLRNR…TGENFRLIYD (63 aa).

It belongs to the eukaryotic ribosomal protein eS4 family.

This is Small ribosomal subunit protein eS4 (RPS4) from Bos taurus (Bovine).